The primary structure comprises 436 residues: Chorion-specific transcription factor GCMa (436 aa).

The GCM DNA-binding region spans 14–169; the sequence is LSWDINDMKL…KLEAEARRAM (156 aa). 8 residues coordinate Zn(2+): C76, C82, C86, C113, C116, C125, H152, and H154.

In terms of processing, polyubiquitinated in the presence of UBE2D2 and FBXW2 (in vitro).

It is found in the nucleus. Its function is as follows. Transcription factor involved in the control of expression of placental growth factor (PGF) and other placenta-specific genes. Binds to the trophoblast-specific element 2 (TSE2) of the aromatase gene enhancer. Binds to the SYDE1 promoter. Has a central role in mediating the differentiation of trophoblast cells along both the villous and extravillous pathways in placental development. This Rattus norvegicus (Rat) protein is Chorion-specific transcription factor GCMa (Gcm1).